A 313-amino-acid polypeptide reads, in one-letter code: UDP-glucose 4-epimerase (313 aa).

Residues 11–12 (FI), 31–36 (DDLSSG), 56–57 (DI), and 77–81 (LAAQI) each bind NAD(+). S121 and Y146 together coordinate substrate. Residues Y146 and K150 each contribute to the NAD(+) site. Y146 serves as the catalytic Proton acceptor. Residues N175, 189 to 190 (VV), 204 to 206 (KIF), R213, and 271 to 274 (RLGD) each bind substrate.

Belongs to the NAD(P)-dependent epimerase/dehydratase family. As to quaternary structure, homodimer. The cofactor is NAD(+).

It carries out the reaction UDP-alpha-D-glucose = UDP-alpha-D-galactose. Its pathway is carbohydrate metabolism; galactose metabolism. Its function is as follows. Involved in the metabolism of galactose. Catalyzes the conversion of UDP-galactose (UDP-Gal) to UDP-glucose (UDP-Glc) through a mechanism involving the transient reduction of NAD. The sequence is that of UDP-glucose 4-epimerase from Mycolicibacterium smegmatis (strain ATCC 700084 / mc(2)155) (Mycobacterium smegmatis).